A 154-amino-acid chain; its full sequence is Transcriptional repressor NrdR (154 aa).

A zinc finger spans residues 3-34 (CPFCGHSNTQVLDTRMSEDGDAVRRRRRCEAC). The region spanning 49–139 (PAIVKKNGSR…VYRSFEDVAE (91 aa)) is the ATP-cone domain.

This sequence belongs to the NrdR family. Zn(2+) is required as a cofactor.

Negatively regulates transcription of bacterial ribonucleotide reductase nrd genes and operons by binding to NrdR-boxes. The protein is Transcriptional repressor NrdR of Cupriavidus pinatubonensis (strain JMP 134 / LMG 1197) (Cupriavidus necator (strain JMP 134)).